We begin with the raw amino-acid sequence, 397 residues long: Purine ribonucleoside efflux pump NepI (397 aa).

Topologically, residues 1 to 21 (MNENIAEKFRADGVARPNWSA) are cytoplasmic. A helical membrane pass occupies residues 22-42 (VFAVAFCVACLITVEFLPVSL). The Periplasmic portion of the chain corresponds to 43-54 (LTPMAQDLGISE). Residues 55-75 (GVAGQSVTVTAFVAMFSSLFI) form a helical membrane-spanning segment. Over 76–85 (TQIIQATDRR) the chain is Cytoplasmic. The chain crosses the membrane as a helical span at residues 86 to 106 (YIVILFAVLLTASCLMVSFAN). Residue S107 is a topological domain, periplasmic. A helical transmembrane segment spans residues 108 to 128 (FTLLLLGRACLGLALGGFWAI). Over 129 to 147 (SASLTMRLVPARTVPKALS) the chain is Cytoplasmic. A helical membrane pass occupies residues 148-168 (VIFGAVSIALVIAAPLGSFLG). Residues 169 to 175 (GIIGWRN) lie on the Periplasmic side of the membrane. The chain crosses the membrane as a helical span at residues 176-196 (VFNAAAVMGVLCVIWVVKSLP). The Cytoplasmic segment spans residues 197–215 (SLPGEPSHQKQNMFSLLQR). The helical transmembrane segment at 216–236 (PGVMAGMIAIFMSFAGQFAFF) threads the bilayer. The Periplasmic segment spans residues 237–255 (TYIRPVYMNLAGFDVDGLT). A helical transmembrane segment spans residues 256–276 (LVLLSFGIASFVGTSFSSYVL). Residues 277–281 (KRSVK) lie on the Cytoplasmic side of the membrane. A helical transmembrane segment spans residues 282-302 (LALAGAPLLLALSALTLIVWG). Residues 303-305 (SDK) lie on the Periplasmic side of the membrane. Residues 306 to 326 (TVAAAIAIIWGLAFALVPVGW) form a helical membrane-spanning segment. At 327-343 (STWITRSLADQAEKAGS) the chain is on the cytoplasmic side. Residues 344-364 (IQVAVIQLANTCGAAVGGYAL) form a helical membrane-spanning segment. The Periplasmic segment spans residues 365 to 366 (DN). The helical transmembrane segment at 367–387 (FGLLSPLALSGGLMLLTALVV) threads the bilayer. The Cytoplasmic portion of the chain corresponds to 388-397 (AAKVRITPMS).

It belongs to the major facilitator superfamily. DHA1 family. NepI (TC 2.A.1.2.26) subfamily.

It is found in the cell inner membrane. The enzyme catalyses inosine(in) + H(+)(out) = inosine(out) + H(+)(in). The catalysed reaction is guanosine(in) + H(+)(out) = guanosine(out) + H(+)(in). In terms of biological role, involved in the efflux of purine ribonucleosides, such as inosine and guanosine. The sequence is that of Purine ribonucleoside efflux pump NepI from Salmonella paratyphi A (strain ATCC 9150 / SARB42).